Here is a 178-residue protein sequence, read N- to C-terminus: Mediator of RNA polymerase II transcription subunit 21 (178 aa).

The segment at 36–91 (DDDDVNSYSNMAANAPLPQSQQQRQQQKKQQEPQQEIEQPQQQSNPESKSISPPKE) is disordered. Low complexity predominate over residues 67 to 85 (EPQQEIEQPQQQSNPESKS). Residues 128–169 (NEQMNLINELSDKLQAIEEERIQKIKEKDNLLNLLESMIKEV) are a coiled coil.

The protein belongs to the Mediator complex subunit 21 family. In terms of assembly, component of the Mediator complex.

Its subcellular location is the nucleus. Its function is as follows. Component of the Mediator complex, a coactivator involved in the regulated transcription of nearly all RNA polymerase II-dependent genes. Mediator functions as a bridge to convey information from gene-specific regulatory proteins to the basal RNA polymerase II transcription machinery. Mediator is recruited to promoters by direct interactions with regulatory proteins and serves as a scaffold for the assembly of a functional preinitiation complex with RNA polymerase II and the general transcription factors. This is Mediator of RNA polymerase II transcription subunit 21 (SRB7) from Candida albicans (strain SC5314 / ATCC MYA-2876) (Yeast).